Reading from the N-terminus, the 175-residue chain is Adenine phosphoribosyltransferase (175 aa).

This sequence belongs to the purine/pyrimidine phosphoribosyltransferase family. Homodimer.

It localises to the cytoplasm. It catalyses the reaction AMP + diphosphate = 5-phospho-alpha-D-ribose 1-diphosphate + adenine. It functions in the pathway purine metabolism; AMP biosynthesis via salvage pathway; AMP from adenine: step 1/1. In terms of biological role, catalyzes a salvage reaction resulting in the formation of AMP, that is energically less costly than de novo synthesis. The polypeptide is Adenine phosphoribosyltransferase (Synechococcus sp. (strain JA-3-3Ab) (Cyanobacteria bacterium Yellowstone A-Prime)).